A 601-amino-acid polypeptide reads, in one-letter code: Elongation factor 4 (601 aa).

Positions 7-189 (SNIRNFSIVA…AIVHRLPPPQ (183 aa)) constitute a tr-type G domain. Residues 19–24 (DHGKST) and 136–139 (NKVD) contribute to the GTP site.

This sequence belongs to the TRAFAC class translation factor GTPase superfamily. Classic translation factor GTPase family. LepA subfamily.

Its subcellular location is the cell inner membrane. It carries out the reaction GTP + H2O = GDP + phosphate + H(+). In terms of biological role, required for accurate and efficient protein synthesis under certain stress conditions. May act as a fidelity factor of the translation reaction, by catalyzing a one-codon backward translocation of tRNAs on improperly translocated ribosomes. Back-translocation proceeds from a post-translocation (POST) complex to a pre-translocation (PRE) complex, thus giving elongation factor G a second chance to translocate the tRNAs correctly. Binds to ribosomes in a GTP-dependent manner. This is Elongation factor 4 from Rhodopseudomonas palustris (strain BisB18).